The chain runs to 862 residues: Taxadiene synthase (862 aa).

The Mg(2+) site is built by Asp613, Asp617, Asn757, Thr761, and Glu765. The DDXXD motif signature appears at 613–617; sequence DDMAD.

The protein belongs to the terpene synthase family. The cofactor is Mg(2+).

The catalysed reaction is (2E,6E,10E)-geranylgeranyl diphosphate = taxa-4(5),11(12)-diene + diphosphate. The protein operates within alkaloid biosynthesis; taxol biosynthesis; taxa-4(20),11-dien-5alpha-ol from geranylgeranyl diphosphate: step 1/2. Its function is as follows. Catalyzes the cyclization of the ubiquitous isoprenoid intermediate geranylgeranyl diphosphate to taxa-4,11-diene, the parent olefin with a taxane skeleton. The sequence is that of Taxadiene synthase (TDC1) from Taxus baccata (English yew).